The primary structure comprises 443 residues: MAKYFGTDGIRGEVANSTITAEFTQKLGNAVGSLINQKNYPKFVIVGQDTRSSGGFLKFALVSGLNAAGIDVLDLGVVPTPVVAFMTVKHRAAAGFVITASHNKFTDNGIKLFSSNGFKLDDALEEEVEDMIDGDFIYQPQFKFGSYKILANAIDEYIESIHSRFAKFVNYKGKVVVDCAHGAASHNFEALLDKFGIDYVSIASNPDGLNINVGCGATCISNIKKAVKEQKADLGISLDGDADRIIIVDENGQEIDGDGILNILAQYSDICGGTNGIVGTQMTNMSYENHYRANKIPFIRSKVGDRYVLEDLVKYGYKIGGESSGHVINLNFGTTGDGLFTAIQLLAIFSQADKPVSEFKLQGELMQQTLINVPLAKKVTREDLQKVASDVNDVEKRLGNRGRVLLRPSGTEPVLRVMVEADDKSLATNEAEYLVEKVKQKLV.

The active-site Phosphoserine intermediate is the serine 101. 4 residues coordinate Mg(2+): serine 101, aspartate 239, aspartate 241, and aspartate 243. A Phosphoserine modification is found at serine 101.

The protein belongs to the phosphohexose mutase family. Mg(2+) is required as a cofactor. Activated by phosphorylation.

It catalyses the reaction alpha-D-glucosamine 1-phosphate = D-glucosamine 6-phosphate. Functionally, catalyzes the conversion of glucosamine-6-phosphate to glucosamine-1-phosphate. The polypeptide is Phosphoglucosamine mutase (Francisella tularensis subsp. novicida (strain U112)).